Consider the following 354-residue polypeptide: Biotin synthase (354 aa).

One can recognise a Radical SAM core domain in the interval 41 to 268 (NEVQISRLLS…LSRVRLSAGR (228 aa)). Positions 56, 60, and 63 each coordinate [4Fe-4S] cluster. [2Fe-2S] cluster-binding residues include cysteine 100, cysteine 131, cysteine 191, and arginine 263.

The protein belongs to the radical SAM superfamily. Biotin synthase family. As to quaternary structure, homodimer. Requires [4Fe-4S] cluster as cofactor. [2Fe-2S] cluster is required as a cofactor.

It catalyses the reaction (4R,5S)-dethiobiotin + (sulfur carrier)-SH + 2 reduced [2Fe-2S]-[ferredoxin] + 2 S-adenosyl-L-methionine = (sulfur carrier)-H + biotin + 2 5'-deoxyadenosine + 2 L-methionine + 2 oxidized [2Fe-2S]-[ferredoxin]. Its pathway is cofactor biosynthesis; biotin biosynthesis; biotin from 7,8-diaminononanoate: step 2/2. Its function is as follows. Catalyzes the conversion of dethiobiotin (DTB) to biotin by the insertion of a sulfur atom into dethiobiotin via a radical-based mechanism. The chain is Biotin synthase from Shewanella amazonensis (strain ATCC BAA-1098 / SB2B).